The primary structure comprises 173 residues: Chorion class B protein Ld32 (173 aa).

An N-terminal signal peptide occupies residues 1–7 (FVQSALS).

It belongs to the chorion protein family.

Functionally, this protein is one of many from the eggshell of the gypsy moth. The protein is Chorion class B protein Ld32 of Lymantria dispar (Gypsy moth).